Consider the following 290-residue polypeptide: Ribosomal RNA small subunit methyltransferase A (290 aa).

Asparagine 27, leucine 29, glycine 54, glutamate 75, aspartate 100, and asparagine 125 together coordinate S-adenosyl-L-methionine.

Belongs to the class I-like SAM-binding methyltransferase superfamily. rRNA adenine N(6)-methyltransferase family. RsmA subfamily.

The protein resides in the cytoplasm. The catalysed reaction is adenosine(1518)/adenosine(1519) in 16S rRNA + 4 S-adenosyl-L-methionine = N(6)-dimethyladenosine(1518)/N(6)-dimethyladenosine(1519) in 16S rRNA + 4 S-adenosyl-L-homocysteine + 4 H(+). Functionally, specifically dimethylates two adjacent adenosines (A1518 and A1519) in the loop of a conserved hairpin near the 3'-end of 16S rRNA in the 30S particle. May play a critical role in biogenesis of 30S subunits. This Streptococcus pneumoniae (strain JJA) protein is Ribosomal RNA small subunit methyltransferase A.